Consider the following 422-residue polypeptide: Glutamate 2,3-aminomutase (422 aa).

In terms of domain architecture, Radical SAM core spans 150-371 (RRYPDRLIIN…AIPTYIVNAP (222 aa)). [4Fe-4S] cluster contacts are provided by Cys-164, Cys-168, and Cys-171. Lys-376 bears the N6-(pyridoxal phosphate)lysine mark.

Belongs to the radical SAM superfamily. Requires pyridoxal 5'-phosphate as cofactor. It depends on [4Fe-4S] cluster as a cofactor.

It carries out the reaction L-glutamate = 3-aminopentanedioate. In terms of biological role, catalyzes the interconversion of L-glutamate and L-beta-glutamate. Does not have L-lysine 2,3-aminomutase activity. The polypeptide is Glutamate 2,3-aminomutase (eam) (Clostridioides difficile (strain 630) (Peptoclostridium difficile)).